Reading from the N-terminus, the 262-residue chain is Small ribosomal subunit protein uS2 (262 aa).

The protein belongs to the universal ribosomal protein uS2 family.

This is Small ribosomal subunit protein uS2 from Borrelia garinii subsp. bavariensis (strain ATCC BAA-2496 / DSM 23469 / PBi) (Borreliella bavariensis).